Consider the following 231-residue polypeptide: uncharacterized protein (231 aa).

The helical transmembrane segment at 10–30 (SQNIFFIAIVIFILSSVILYH) threads the bilayer.

The protein resides in the membrane. This is an uncharacterized protein from Rickettsia prowazekii (strain Madrid E).